Reading from the N-terminus, the 265-residue chain is Thiamine thiazole synthase (265 aa).

Residues Ala-43, 62 to 63 (ER), Gly-70, Val-134, and 162 to 164 (HVD) contribute to the NAD(+) site. Positions 164 and 179 each coordinate Fe cation. Met-229 contacts NAD(+). Residue Arg-239 participates in glycine binding.

Belongs to the THI4 family. In terms of assembly, homooctamer; tetramer of dimers. It depends on Fe(2+) as a cofactor.

It carries out the reaction hydrogen sulfide + glycine + NAD(+) = ADP-5-ethyl-4-methylthiazole-2-carboxylate + nicotinamide + 3 H2O + H(+). It functions in the pathway cofactor biosynthesis; thiamine diphosphate biosynthesis. Involved in the biosynthesis of the thiazole moiety of thiamine. Catalyzes the conversion of NAD and glycine to adenosine diphosphate 5-(2-hydroxyethyl)-4-methylthiazole-2-carboxylate (ADT), an adenylated thiazole intermediate, using free sulfide as a source of sulfur. The protein is Thiamine thiazole synthase of Sulfolobus acidocaldarius (strain ATCC 33909 / DSM 639 / JCM 8929 / NBRC 15157 / NCIMB 11770).